Reading from the N-terminus, the 364-residue chain is Lipid-A-disaccharide synthase (364 aa).

This sequence belongs to the LpxB family.

The enzyme catalyses a lipid X + a UDP-2-N,3-O-bis[(3R)-3-hydroxyacyl]-alpha-D-glucosamine = a lipid A disaccharide + UDP + H(+). It participates in bacterial outer membrane biogenesis; LPS lipid A biosynthesis. In terms of biological role, condensation of UDP-2,3-diacylglucosamine and 2,3-diacylglucosamine-1-phosphate to form lipid A disaccharide, a precursor of lipid A, a phosphorylated glycolipid that anchors the lipopolysaccharide to the outer membrane of the cell. This chain is Lipid-A-disaccharide synthase, found in Campylobacter jejuni (strain RM1221).